Consider the following 245-residue polypeptide: 1-(5-phosphoribosyl)-5-[(5-phosphoribosylamino)methylideneamino] imidazole-4-carboxamide isomerase (245 aa).

Catalysis depends on Asp-7, which acts as the Proton acceptor. Asp-129 functions as the Proton donor in the catalytic mechanism.

The protein belongs to the HisA/HisF family.

The protein localises to the cytoplasm. It catalyses the reaction 1-(5-phospho-beta-D-ribosyl)-5-[(5-phospho-beta-D-ribosylamino)methylideneamino]imidazole-4-carboxamide = 5-[(5-phospho-1-deoxy-D-ribulos-1-ylimino)methylamino]-1-(5-phospho-beta-D-ribosyl)imidazole-4-carboxamide. The protein operates within amino-acid biosynthesis; L-histidine biosynthesis; L-histidine from 5-phospho-alpha-D-ribose 1-diphosphate: step 4/9. This Escherichia coli O45:K1 (strain S88 / ExPEC) protein is 1-(5-phosphoribosyl)-5-[(5-phosphoribosylamino)methylideneamino] imidazole-4-carboxamide isomerase.